Reading from the N-terminus, the 906-residue chain is Protein translocase subunit SecA (906 aa).

ATP is bound by residues Gln-87, 105–109 (GEGKT), and Asp-512. The interval 839–896 (LEEQQRQQSEAAPRTYTHATAESQLADEEAAGEEGHTTFVRDEQKIGRNDPCPCGSGK) is disordered. Residues 871 to 886 (EEGHTTFVRDEQKIGR) are compositionally biased toward basic and acidic residues. Residues Cys-890, Cys-892, Cys-901, and His-902 each contribute to the Zn(2+) site.

This sequence belongs to the SecA family. As to quaternary structure, monomer and homodimer. Part of the essential Sec protein translocation apparatus which comprises SecA, SecYEG and auxiliary proteins SecDF-YajC and YidC. Requires Zn(2+) as cofactor.

The protein resides in the cell inner membrane. It is found in the cytoplasm. The enzyme catalyses ATP + H2O + cellular proteinSide 1 = ADP + phosphate + cellular proteinSide 2.. In terms of biological role, part of the Sec protein translocase complex. Interacts with the SecYEG preprotein conducting channel. Has a central role in coupling the hydrolysis of ATP to the transfer of proteins into and across the cell membrane, serving both as a receptor for the preprotein-SecB complex and as an ATP-driven molecular motor driving the stepwise translocation of polypeptide chains across the membrane. The sequence is that of Protein translocase subunit SecA from Aeromonas salmonicida (strain A449).